The sequence spans 121 residues: Large ribosomal subunit protein bL12 (121 aa).

The protein belongs to the bacterial ribosomal protein bL12 family. As to quaternary structure, homodimer. Part of the ribosomal stalk of the 50S ribosomal subunit. Forms a multimeric L10(L12)X complex, where L10 forms an elongated spine to which 2 to 4 L12 dimers bind in a sequential fashion. Binds GTP-bound translation factors.

Forms part of the ribosomal stalk which helps the ribosome interact with GTP-bound translation factors. Is thus essential for accurate translation. This chain is Large ribosomal subunit protein bL12, found in Vibrio cholerae serotype O1 (strain ATCC 39541 / Classical Ogawa 395 / O395).